The primary structure comprises 125 residues: Holo-[acyl-carrier-protein] synthase (125 aa).

Mg(2+) is bound by residues aspartate 8 and glutamate 57.

Belongs to the P-Pant transferase superfamily. AcpS family. Requires Mg(2+) as cofactor.

The protein localises to the cytoplasm. It catalyses the reaction apo-[ACP] + CoA = holo-[ACP] + adenosine 3',5'-bisphosphate + H(+). Functionally, transfers the 4'-phosphopantetheine moiety from coenzyme A to a Ser of acyl-carrier-protein. The polypeptide is Holo-[acyl-carrier-protein] synthase (Nitrosospira multiformis (strain ATCC 25196 / NCIMB 11849 / C 71)).